We begin with the raw amino-acid sequence, 226 residues long: Clarin-3 (226 aa).

A helical membrane pass occupies residues 8–28; sequence LMFLSGFLTSLGSVVVICSIL. Asparagine 46 is a glycosylation site (N-linked (GlcNAc...) asparagine). 3 helical membrane-spanning segments follow: residues 92–112, 128–148, and 181–201; these read VVIL…VFTF, GVYT…VLFV, and FWLT…IIFY.

This sequence belongs to the clarin family.

It localises to the membrane. The chain is Clarin-3 (Clrn3) from Mus musculus (Mouse).